The chain runs to 133 residues: Ribonuclease VapC10 (133 aa).

The PINc domain maps to isoleucine 2 to glutamine 119. Residues aspartate 5 and aspartate 92 each contribute to the Mg(2+) site.

It belongs to the PINc/VapC protein family. The cofactor is Mg(2+).

Toxic component of a type II toxin-antitoxin (TA) system. An RNase. The cognate antitoxin is VapB10. The polypeptide is Ribonuclease VapC10 (Mycobacterium tuberculosis (strain CDC 1551 / Oshkosh)).